Reading from the N-terminus, the 112-residue chain is UPF0145 protein CD630_17110 (112 aa).

Belongs to the UPF0145 family.

This chain is UPF0145 protein CD630_17110, found in Clostridioides difficile (strain 630) (Peptoclostridium difficile).